Reading from the N-terminus, the 154-residue chain is Deoxyuridine 5'-triphosphate nucleotidohydrolase (154 aa).

Residues 72–74 (RSG), asparagine 85, 89–91 (LID), and methionine 99 contribute to the substrate site.

The protein belongs to the dUTPase family. Requires Mg(2+) as cofactor.

The catalysed reaction is dUTP + H2O = dUMP + diphosphate + H(+). Its pathway is pyrimidine metabolism; dUMP biosynthesis; dUMP from dCTP (dUTP route): step 2/2. Functionally, this enzyme is involved in nucleotide metabolism: it produces dUMP, the immediate precursor of thymidine nucleotides and it decreases the intracellular concentration of dUTP so that uracil cannot be incorporated into DNA. This chain is Deoxyuridine 5'-triphosphate nucleotidohydrolase, found in Psychrobacter arcticus (strain DSM 17307 / VKM B-2377 / 273-4).